The chain runs to 318 residues: Aspartate carbamoyltransferase catalytic subunit (318 aa).

Arginine 59 and threonine 60 together coordinate carbamoyl phosphate. L-aspartate is bound at residue lysine 87. Carbamoyl phosphate contacts are provided by arginine 109, histidine 137, and glutamine 140. 2 residues coordinate L-aspartate: arginine 170 and arginine 224. 2 residues coordinate carbamoyl phosphate: glycine 265 and proline 266.

This sequence belongs to the aspartate/ornithine carbamoyltransferase superfamily. ATCase family. As to quaternary structure, heterododecamer (2C3:3R2) of six catalytic PyrB chains organized as two trimers (C3), and six regulatory PyrI chains organized as three dimers (R2).

The enzyme catalyses carbamoyl phosphate + L-aspartate = N-carbamoyl-L-aspartate + phosphate + H(+). It functions in the pathway pyrimidine metabolism; UMP biosynthesis via de novo pathway; (S)-dihydroorotate from bicarbonate: step 2/3. Catalyzes the condensation of carbamoyl phosphate and aspartate to form carbamoyl aspartate and inorganic phosphate, the committed step in the de novo pyrimidine nucleotide biosynthesis pathway. In Rhizobium johnstonii (strain DSM 114642 / LMG 32736 / 3841) (Rhizobium leguminosarum bv. viciae), this protein is Aspartate carbamoyltransferase catalytic subunit.